We begin with the raw amino-acid sequence, 426 residues long: Serine--tRNA ligase (426 aa).

231-233 is a binding site for L-serine; the sequence is TAE. 262–264 is an ATP binding site; that stretch reads RAE. E285 is a binding site for L-serine. 349-352 contacts ATP; the sequence is EISS. S385 is a binding site for L-serine.

Belongs to the class-II aminoacyl-tRNA synthetase family. Type-1 seryl-tRNA synthetase subfamily. In terms of assembly, homodimer. The tRNA molecule binds across the dimer.

Its subcellular location is the cytoplasm. It catalyses the reaction tRNA(Ser) + L-serine + ATP = L-seryl-tRNA(Ser) + AMP + diphosphate + H(+). The enzyme catalyses tRNA(Sec) + L-serine + ATP = L-seryl-tRNA(Sec) + AMP + diphosphate + H(+). The protein operates within aminoacyl-tRNA biosynthesis; selenocysteinyl-tRNA(Sec) biosynthesis; L-seryl-tRNA(Sec) from L-serine and tRNA(Sec): step 1/1. In terms of biological role, catalyzes the attachment of serine to tRNA(Ser). Is also able to aminoacylate tRNA(Sec) with serine, to form the misacylated tRNA L-seryl-tRNA(Sec), which will be further converted into selenocysteinyl-tRNA(Sec). The sequence is that of Serine--tRNA ligase from Myxococcus xanthus (strain DK1622).